Reading from the N-terminus, the 403-residue chain is Tyrosine--tRNA ligase (403 aa).

Positions 43-52 (PTAPDLHLGH) match the 'HIGH' region motif. Residues 227 to 231 (KMSKS) carry the 'KMSKS' region motif. Lysine 230 lines the ATP pocket. The 62-residue stretch at 338 to 399 (LPIAQLLKQT…GKRKFARVTI (62 aa)) folds into the S4 RNA-binding domain.

The protein belongs to the class-I aminoacyl-tRNA synthetase family. TyrS type 2 subfamily. Homodimer.

It is found in the cytoplasm. The enzyme catalyses tRNA(Tyr) + L-tyrosine + ATP = L-tyrosyl-tRNA(Tyr) + AMP + diphosphate + H(+). In terms of biological role, catalyzes the attachment of tyrosine to tRNA(Tyr) in a two-step reaction: tyrosine is first activated by ATP to form Tyr-AMP and then transferred to the acceptor end of tRNA(Tyr). This chain is Tyrosine--tRNA ligase, found in Nitrosospira multiformis (strain ATCC 25196 / NCIMB 11849 / C 71).